A 468-amino-acid chain; its full sequence is GDNF family receptor alpha-1 (468 aa).

Residues 1 to 24 form the signal peptide; that stretch reads MFLATLYFALPLLDLLMSAEVSGG. 3 consecutive repeat copies span residues 25 to 113, 150 to 238, and 239 to 342. A disulfide bridge links C36 with C42. An N-linked (GlcNAc...) asparagine glycan is attached at N59. Cystine bridges form between C154-C214, C161-C167, C178-C192, C187-C233, C216-C221, C243-C313, C250-C256, C267-C285, C277-C337, and C315-C325. N-linked (GlcNAc...) asparagine glycans are attached at residues N347 and N406. S430 carries the GPI-anchor amidated serine lipid modification. Positions 431–468 are cleaved as a propeptide — removed in mature form; sequence HITTKSMAAPPSCSLSSLPVLMLTALAALLSVSLAETS.

The protein belongs to the GDNFR family. As to quaternary structure, interacts with GDNF ligand and RET: forms a 2:2:2 ternary complex composed of GDNF ligand, GFRA1 and RET receptor. Interacts with SORL1, either alone or in complex with GDNF. Interaction between SORL1 and GFRA1 leads to GFRA1 internalization, but not degradation. As to expression, expressed in liver, brain, kidney and cochlea.

Its subcellular location is the cell membrane. It localises to the golgi apparatus. The protein localises to the trans-Golgi network. It is found in the endosome. The protein resides in the multivesicular body. Functionally, coreceptor for GDNF, a neurotrophic factor that enhances survival and morphological differentiation of dopaminergic neurons and increases their high-affinity dopamine uptake. GDNF-binding leads to autophosphorylation and activation of the RET receptor. The sequence is that of GDNF family receptor alpha-1 (Gfra1) from Rattus norvegicus (Rat).